A 545-amino-acid chain; its full sequence is Bifunctional purine biosynthesis protein PurH (545 aa).

An MGS-like domain is found at 1–150 (MTNTNRPIRR…KNHATVAIVT (150 aa)).

The protein belongs to the PurH family.

The catalysed reaction is (6R)-10-formyltetrahydrofolate + 5-amino-1-(5-phospho-beta-D-ribosyl)imidazole-4-carboxamide = 5-formamido-1-(5-phospho-D-ribosyl)imidazole-4-carboxamide + (6S)-5,6,7,8-tetrahydrofolate. It catalyses the reaction IMP + H2O = 5-formamido-1-(5-phospho-D-ribosyl)imidazole-4-carboxamide. It functions in the pathway purine metabolism; IMP biosynthesis via de novo pathway; 5-formamido-1-(5-phospho-D-ribosyl)imidazole-4-carboxamide from 5-amino-1-(5-phospho-D-ribosyl)imidazole-4-carboxamide (10-formyl THF route): step 1/1. The protein operates within purine metabolism; IMP biosynthesis via de novo pathway; IMP from 5-formamido-1-(5-phospho-D-ribosyl)imidazole-4-carboxamide: step 1/1. The chain is Bifunctional purine biosynthesis protein PurH from Bifidobacterium longum (strain NCC 2705).